The primary structure comprises 182 residues: Dual-action ribosomal maturation protein DarP (182 aa).

The protein belongs to the DarP family.

It is found in the cytoplasm. In terms of biological role, member of a network of 50S ribosomal subunit biogenesis factors which assembles along the 30S-50S interface, preventing incorrect 23S rRNA structures from forming. Promotes peptidyl transferase center (PTC) maturation. This is Dual-action ribosomal maturation protein DarP from Serratia proteamaculans (strain 568).